The primary structure comprises 421 residues: ATP-dependent RNA helicase RhlB (421 aa).

The Q motif motif lies at 9–37 (QKFSDFALHPAVIEALEKKGFHNCTPIQA). Positions 40-219 (LPLTLEGRDV…FEQMNNAEYV (180 aa)) constitute a Helicase ATP-binding domain. An ATP-binding site is contributed by 53-60 (AQTGTGKT). A DEAD box motif is present at residues 165–168 (DEAD). One can recognise a Helicase C-terminal domain in the interval 245–390 (RLLQTLLEEE…VSKYNPDALM (146 aa)). The tract at residues 396–421 (PLRLTRARPGNGPRRNGPPRNRRRSG) is disordered. Residues 403–414 (RPGNGPRRNGPP) show a composition bias toward low complexity.

Belongs to the DEAD box helicase family. RhlB subfamily. Component of the RNA degradosome, which is a multiprotein complex involved in RNA processing and mRNA degradation.

It is found in the cytoplasm. It catalyses the reaction ATP + H2O = ADP + phosphate + H(+). Its function is as follows. DEAD-box RNA helicase involved in RNA degradation. Has RNA-dependent ATPase activity and unwinds double-stranded RNA. The sequence is that of ATP-dependent RNA helicase RhlB from Klebsiella pneumoniae subsp. pneumoniae (strain ATCC 700721 / MGH 78578).